Consider the following 84-residue polypeptide: Small ribosomal subunit protein eS27 (84 aa).

The C4-type zinc-finger motif lies at 38 to 60 (CPKCGATTTTFSHAHRQILCQKC).

This sequence belongs to the eukaryotic ribosomal protein eS27 family. As to quaternary structure, component of the small ribosomal subunit. Zn(2+) serves as cofactor.

It is found in the cytoplasm. Functionally, component of the small ribosomal subunit. The ribosome is a large ribonucleoprotein complex responsible for the synthesis of proteins in the cell. Required for proper rRNA processing and maturation of 18S rRNAs. The chain is Small ribosomal subunit protein eS27 (RPS27) from Entamoeba histolytica (strain ATCC 30459 / HM-1:IMSS / ABRM).